Consider the following 31-residue polypeptide: Cyclotide mden-M (31 aa).

Positions 1-31 (GTIPCGESCVYIPCITSALGCSCKKKVCYKN) form a cross-link, cyclopeptide (Gly-Asn). 3 cysteine pairs are disulfide-bonded: Cys-5/Cys-21, Cys-9/Cys-23, and Cys-14/Cys-28.

This sequence belongs to the cyclotide family. Bracelet subfamily. In terms of processing, this is a cyclic peptide.

Probably participates in a plant defense mechanism. The sequence is that of Cyclotide mden-M from Melicytus dentatus (Tree violet).